Reading from the N-terminus, the 300-residue chain is B1 kinase (300 aa).

Residues 16–282 form the Protein kinase domain; it reads WVVGPLIGKG…ITMVNSLTYF (267 aa). Residues 22 to 30 and lysine 45 each bind ATP; that span reads IGKGGFGSI. Asparagine 147 serves as the catalytic Proton acceptor.

The protein belongs to the protein kinase superfamily. Ser/Thr protein kinase family. Poxviruses subfamily. Interacts with host JIP1; this interaction increases the amount of MAPK bound to JIP1 and subsequently increases the activity of transcription factors, such as JUN, that respond to these complexes. Interacts with protein OPG198; this interaction inhibits the repressive activity of OPG198 pseudokinase on viral replication factory formation. Mg(2+) is required as a cofactor. In terms of processing, autophosphorylated.

It localises to the virion. Its subcellular location is the host cytoplasm. The catalysed reaction is L-seryl-[protein] + ATP = O-phospho-L-seryl-[protein] + ADP + H(+). It catalyses the reaction L-threonyl-[protein] + ATP = O-phospho-L-threonyl-[protein] + ADP + H(+). In terms of biological role, essential serine/threonine-protein kinase that plays different role in the viral life cycle. Phosphorylates the host small ribosomal protein RACK1 thereby customizing the ribosomes to a state optimal for viral mRNAs (which contain poly-A leaders) but not for host mRNAs. Facilitates viral DNA replication by inhibiting host BANF1, a cellular host defense responsive to foreign DNA. Phosphorylates host BANF1 on serine and threonine residues; this leads to BANF1 relocalization to the cytoplasm, loss of dimerization and impaired DNA binding activity. Indeed, BANF1 activity depends on its DNA-binding property which is blocked by VPK1-mediated phosphorylation. Required for viral intermediate genes expression, probably by inhibiting host BANF1. Modulates cellular responses via host JUN by two different mechanisms, either by direct phosphorylation or by modulation of upstream JIP1-MAPK complexes. Seems to participate in the accumulation/processing of late proteins and thus in virion maturation. In addition, inhibits B12 repressive activity on viral DNA replication via a phosphorylation-dependent mechanism. This Homo sapiens (Human) protein is B1 kinase (OPG187).